The chain runs to 272 residues: Glutamate 5-kinase (272 aa).

Residue Lys14 participates in ATP binding. Ser54, Asp141, and Asn157 together coordinate substrate. Residues 177 to 178 (SD) and 219 to 225 (TGGMLSK) each bind ATP.

This sequence belongs to the glutamate 5-kinase family.

Its subcellular location is the cytoplasm. It carries out the reaction L-glutamate + ATP = L-glutamyl 5-phosphate + ADP. It participates in amino-acid biosynthesis; L-proline biosynthesis; L-glutamate 5-semialdehyde from L-glutamate: step 1/2. Functionally, catalyzes the transfer of a phosphate group to glutamate to form L-glutamate 5-phosphate. The sequence is that of Glutamate 5-kinase from Streptococcus pyogenes serotype M28 (strain MGAS6180).